A 276-amino-acid polypeptide reads, in one-letter code: Tryptophan synthase alpha chain (276 aa).

Catalysis depends on proton acceptor residues glutamate 55 and aspartate 66.

It belongs to the TrpA family. In terms of assembly, tetramer of two alpha and two beta chains.

The catalysed reaction is (1S,2R)-1-C-(indol-3-yl)glycerol 3-phosphate + L-serine = D-glyceraldehyde 3-phosphate + L-tryptophan + H2O. Its pathway is amino-acid biosynthesis; L-tryptophan biosynthesis; L-tryptophan from chorismate: step 5/5. Its function is as follows. The alpha subunit is responsible for the aldol cleavage of indoleglycerol phosphate to indole and glyceraldehyde 3-phosphate. This chain is Tryptophan synthase alpha chain, found in Gloeobacter violaceus (strain ATCC 29082 / PCC 7421).